Reading from the N-terminus, the 185-residue chain is Elongation factor P (185 aa).

It belongs to the elongation factor P family.

The protein resides in the cytoplasm. Its pathway is protein biosynthesis; polypeptide chain elongation. Involved in peptide bond synthesis. Stimulates efficient translation and peptide-bond synthesis on native or reconstituted 70S ribosomes in vitro. Probably functions indirectly by altering the affinity of the ribosome for aminoacyl-tRNA, thus increasing their reactivity as acceptors for peptidyl transferase. This Mesomycoplasma hyopneumoniae (strain J / ATCC 25934 / NCTC 10110) (Mycoplasma hyopneumoniae) protein is Elongation factor P.